The following is a 111-amino-acid chain: MSDTLTRLAAVLEERRNAAPDSSYVASLYHKGLNKILEKVGEESVETIIAAKDAAASGDCQELIYETADLWFHSLVMLSALGQHPQAVLDELERRFGLSGHAEKAARQPSA.

This sequence belongs to the PRA-PH family.

The protein localises to the cytoplasm. It carries out the reaction 1-(5-phospho-beta-D-ribosyl)-ATP + H2O = 1-(5-phospho-beta-D-ribosyl)-5'-AMP + diphosphate + H(+). It functions in the pathway amino-acid biosynthesis; L-histidine biosynthesis; L-histidine from 5-phospho-alpha-D-ribose 1-diphosphate: step 2/9. The sequence is that of Phosphoribosyl-ATP pyrophosphatase from Pseudomonas paraeruginosa (strain DSM 24068 / PA7) (Pseudomonas aeruginosa (strain PA7)).